Consider the following 2696-residue polypeptide: Histone-lysine N-methyltransferase, H3 lysine-36 specific (2696 aa).

S117 carries the phosphoserine modification. Disordered stretches follow at residues 207 to 252 (MGSE…EKAA) and 281 to 311 (DPDSSTSTLGNMLELPGTSSSSTSQELPFCQ). Positions 236–248 (QKNKQRNEVDGSN) are enriched in basic and acidic residues. Polar residues-rich tracts occupy residues 281–290 (DPDSSTSTLG) and 297–306 (GTSSSSTSQE). The PWWP 1 domain occupies 323-388 (VGDLIWAKFK…AGKAIVMFEG (66 aa)). A phosphoserine mark is found at S483 and S486. The tract at residues 487-514 (ADEKEKPCAKSRARKSSDNPKRTSVKKG) is disordered. S766 bears the Phosphoserine mark. Residues 872–891 (LGEDVSDSGTSKPSKPLLFS) are disordered. K906 is covalently cross-linked (Glycyl lysine isopeptide (Lys-Gly) (interchain with G-Cter in SUMO2)). Disordered stretches follow at residues 936-1035 (YRSP…DAFS), 1067-1093 (VLQGDRERGGSLRGGAEDPSKEDPLQI), 1112-1134 (SKVKQSDPGKISEKGLSFENGKG), 1243-1272 (SIGDMEKEPGIPSLTPQAELPEPAVRSEKK), 1294-1344 (PKKK…EPPV), 1382-1428 (SPRP…KKGD), and 1480-1534 (KMQC…MQGE). Over residues 948–961 (SPVGVSKVLVSGGS) the composition is skewed to low complexity. The span at 971 to 982 (GTQNSANPSPSG) shows a compositional bias: polar residues. 3 stretches are compositionally biased toward basic and acidic residues: residues 1000–1017 (SDKRDLPASGKSRSDCVT), 1070–1090 (GDRERGGSLRGGAEDPSKEDP), and 1112–1124 (SKVKQSDPGKISE). Positions 1300 to 1314 (KVQEQVHKVSSRCEE) are enriched in basic and acidic residues. The span at 1323-1337 (SSAQNKQVDENSLIS) shows a compositional bias: polar residues. K1339 is covalently cross-linked (Glycyl lysine isopeptide (Lys-Gly) (interchain with G-Cter in SUMO2)). S1510 carries the post-translational modification Phosphoserine. The span at 1513-1523 (ETVEEGVEHDP) shows a compositional bias: basic and acidic residues. 3 consecutive PHD-type zinc fingers follow at residues 1543–1589 (ENVC…CRTG), 1590–1646 (IHTC…CHAA), and 1707–1751 (VSWC…CKAG). The region spanning 1756 to 1818 (YREIVWVKVG…QARVFPYMEG (63 aa)) is the PWWP 2 domain. One can recognise an AWS domain in the interval 1890–1940 (SEIPRCNCKATDENPCGIDSECINRMLLYECHPTVCPAGGRCQNQCFSKRQ). Residues 1942–2059 (PEVEIFRTLQ…AGTELTFNYN (118 aa)) enclose the SET domain. S-adenosyl-L-methionine-binding positions include 1952-1954 (RGW), 1994-1997 (TNFY), 2020-2021 (NH), N2065, and K2071. The tract at residues 2060 to 2066 (LECLGNG) is inhibits enzyme activity in the absence of bound histone. The Post-SET domain maps to 2066 to 2082 (GKTVCKCGAPNCSGFLG). Positions 2091–2111 (ATEEKSKKFKKKQQGKRRTQG) are disordered. The span at 2097–2108 (KKFKKKQQGKRR) shows a compositional bias: basic residues. Residues 2118 to 2165 (EDECFSCGDAGQLVSCKKPGCPKVYHADCLNLTKRPAGKWECPWHQCD) form a PHD-type 4; atypical zinc finger. The tract at residues 2213–2422 (LEPGEIREYV…SLSQRLPPPE (210 aa)) is disordered. Residues 2222–2232 (VPPPVPLPPGP) show a composition bias toward pro residues. Residues 2281–2298 (RPLERTDSRPQPLDKVRD) show a composition bias toward basic and acidic residues. Residues 2303-2314 (GTKSQSLVSSQR) are compositionally biased toward polar residues. Residues 2330 to 2348 (SDKPSPVTSPSSSPSVRSQ) are compositionally biased toward low complexity. The residue at position 2369 (S2369) is a Phosphoserine. Composition is skewed to polar residues over residues 2371 to 2381 (RPQSLEKTSVP) and 2394 to 2404 (ITSSPKPQTSD). T2462 is subject to Phosphothreonine. Disordered regions lie at residues 2464–2499 (RQKERAASPHQVTPQADEKMPVLESSSWPASKGLGH), 2553–2575 (TQASGRASAGAEQTPGPLSQSPG), 2595–2616 (KSGQSFRSLGKAPASLPTEEKK), and 2665–2696 (LGRGQDPKPEQNTLPALNQAPSSHKCAESEQK). Residue S2471 is modified to Phosphoserine. Residue K2616 forms a Glycyl lysine isopeptide (Lys-Gly) (interchain with G-Cter in SUMO2) linkage. A compositionally biased stretch (polar residues) spans 2674–2686 (EQNTLPALNQAPS).

Belongs to the class V-like SAM-binding methyltransferase superfamily. Interacts with the ligand-binding domains of RARA and THRA in the absence of ligand; in the presence of ligand the interaction is severely disrupted but some binding still occurs. Interacts with the ligand-binding domains of RXRA and ESRRA only in the presence of ligand. Interacts with ZNF496. Interacts with AR DNA- and ligand-binding domains. As to expression, expressed in the fetal/adult brain, kidney, skeletal muscle, spleen, and the thymus, and faintly in the lung.

It is found in the nucleus. It localises to the chromosome. It carries out the reaction L-lysyl(36)-[histone H3] + 2 S-adenosyl-L-methionine = N(6),N(6)-dimethyl-L-lysyl(36)-[histone H3] + 2 S-adenosyl-L-homocysteine + 2 H(+). In terms of biological role, histone methyltransferase that dimethylates Lys-36 of histone H3 (H3K36me2). Transcriptional intermediary factor capable of both negatively or positively influencing transcription, depending on the cellular context. This Homo sapiens (Human) protein is Histone-lysine N-methyltransferase, H3 lysine-36 specific (NSD1).